Here is a 317-residue protein sequence, read N- to C-terminus: Cytochrome c biogenesis protein CcsA (317 aa).

8 consecutive transmembrane segments (helical) span residues 9–29 (ILTH…LITF), 46–63 (TATA…WVYS), 71–91 (LYES…IFDF), 98–118 (LSAI…SGFL), 143–163 (MVLG…LLVI), 225–245 (IISL…VWAN), 258–273 (ETWA…IYLH), and 286–306 (AIVA…VNLL).

Belongs to the CcmF/CycK/Ccl1/NrfE/CcsA family. In terms of assembly, may interact with Ccs1.

Its subcellular location is the plastid. It is found in the chloroplast thylakoid membrane. Its function is as follows. Required during biogenesis of c-type cytochromes (cytochrome c6 and cytochrome f) at the step of heme attachment. The sequence is that of Cytochrome c biogenesis protein CcsA from Citrus sinensis (Sweet orange).